A 266-amino-acid chain; its full sequence is GTP cyclohydrolase III (266 aa).

The protein belongs to the archaeal-type GTP cyclohydrolase family.

The enzyme catalyses GTP + 3 H2O = 2-amino-5-formylamino-6-(5-phospho-D-ribosylamino)pyrimidin-4(3H)-one + 2 phosphate + 2 H(+). In terms of biological role, catalyzes the formation of 2-amino-5-formylamino-6-ribofuranosylamino-4(3H)-pyrimidinone ribonucleotide monophosphate and inorganic phosphate from GTP. Also has an independent pyrophosphate phosphohydrolase activity. In Methanococcus vannielii (strain ATCC 35089 / DSM 1224 / JCM 13029 / OCM 148 / SB), this protein is GTP cyclohydrolase III.